The sequence spans 117 residues: Probable non-functional immunoglobulin kappa variable 1D-42 (117 aa).

A signal peptide spans 1-22; that stretch reads MDMRVPAQLLGLLLLWLPGVRF. Residues 23–45 are framework-1; the sequence is DIQMTQSPSFLSASVGDRVSIIC. Positions 23-117 constitute an Ig-like domain; it reads DIQMTQSPSF…YYCKQDFSYP (95 aa). Cysteine 45 and cysteine 110 are oxidised to a cystine. A complementarity-determining-1 region spans residues 46–56; it reads WASEGISSNLA. Residues 57 to 71 form a framework-2 region; sequence WYLQKPGKSPKLFLY. The segment at 72–78 is complementarity-determining-2; the sequence is DAKDLHP. A framework-3 region spans residues 79–110; sequence GVSSRFSGRGSGTDFTLTIISLKPEDFAAYYC. Residues 111–117 are complementarity-determining-3; sequence KQDFSYP.

As to quaternary structure, immunoglobulins are composed of two identical heavy chains and two identical light chains; disulfide-linked.

It is found in the secreted. Its subcellular location is the cell membrane. In terms of biological role, probable non-functional open reading frame (ORF) of V region of the variable domain of immunoglobulin light chains. Non-functional ORF generally cannot participate in the synthesis of a productive immunoglobulin chain due to altered V-(D)-J or switch recombination and/or splicing site (at mRNA level) and/or conserved amino acid change (protein level). Immunoglobulins, also known as antibodies, are membrane-bound or secreted glycoproteins produced by B lymphocytes. In the recognition phase of humoral immunity, the membrane-bound immunoglobulins serve as receptors which, upon binding of a specific antigen, trigger the clonal expansion and differentiation of B lymphocytes into immunoglobulins-secreting plasma cells. Secreted immunoglobulins mediate the effector phase of humoral immunity, which results in the elimination of bound antigens. The antigen binding site is formed by the variable domain of one heavy chain, together with that of its associated light chain. Thus, each immunoglobulin has two antigen binding sites with remarkable affinity for a particular antigen. The variable domains are assembled by a process called V-(D)-J rearrangement and can then be subjected to somatic hypermutations which, after exposure to antigen and selection, allow affinity maturation for a particular antigen. The polypeptide is Probable non-functional immunoglobulin kappa variable 1D-42 (Homo sapiens (Human)).